Consider the following 163-residue polypeptide: ATP synthase subunit b (163 aa).

Residues 9–29 (GLLIAQLINVVFVVWLLTTFL) form a helical membrane-spanning segment.

Belongs to the ATPase B chain family. In terms of assembly, F-type ATPases have 2 components, F(1) - the catalytic core - and F(0) - the membrane proton channel. F(1) has five subunits: alpha(3), beta(3), gamma(1), delta(1), epsilon(1). F(0) has four main subunits: a(1), b(2) and c(10-14). The alpha and beta chains form an alternating ring which encloses part of the gamma chain. F(1) is attached to F(0) by a central stalk formed by the gamma and epsilon chains, while a peripheral stalk is formed by the delta and b chains.

The protein localises to the cell membrane. F(1)F(0) ATP synthase produces ATP from ADP in the presence of a proton or sodium gradient. F-type ATPases consist of two structural domains, F(1) containing the extramembraneous catalytic core and F(0) containing the membrane proton channel, linked together by a central stalk and a peripheral stalk. During catalysis, ATP synthesis in the catalytic domain of F(1) is coupled via a rotary mechanism of the central stalk subunits to proton translocation. In terms of biological role, component of the F(0) channel, it forms part of the peripheral stalk, linking F(1) to F(0). This chain is ATP synthase subunit b, found in Roseiflexus castenholzii (strain DSM 13941 / HLO8).